Here is a 205-residue protein sequence, read N- to C-terminus: Small ribosomal subunit protein uS4 (205 aa).

The interval 1-49 is disordered; sequence MSKRQSAKYKLDRRMGENIWGRPKSPVNRREYGPGQHGQRRKGKLSDFG. Residues 94-157 form the S4 RNA-binding domain; sequence SRLDAIVFRA…KQLTVVLESV (64 aa).

Belongs to the universal ribosomal protein uS4 family. As to quaternary structure, part of the 30S ribosomal subunit. Contacts protein S5. The interaction surface between S4 and S5 is involved in control of translational fidelity.

In terms of biological role, one of the primary rRNA binding proteins, it binds directly to 16S rRNA where it nucleates assembly of the body of the 30S subunit. With S5 and S12 plays an important role in translational accuracy. The sequence is that of Small ribosomal subunit protein uS4 from Chelativorans sp. (strain BNC1).